The chain runs to 439 residues: uncharacterized protein (439 aa).

CBS domains are found at residues 195-254 (LTPA…SIEK) and 256-314 (MTKN…KQPQ).

This is an uncharacterized protein from Bacillus subtilis (strain 168).